The primary structure comprises 39 residues: TTKNYGNGVCNSVNWCQCGNVWASCNLATGCAAWLCKLA.

It localises to the secreted. Functionally, bacteriocin active against the Gram-negative bacteria C.jejuni, Y.enterocolitica and Y.pseudotuberculosis, and the Gram-positive bacteria S.aureus, S.epidermidis, L.monocytogenes and Listeria spp. When added to the drinking water of chickens, causes a decrease in the levels of C.jejuni and S.enteritidis in the ceca, and in the levels of S.enteritidis in the liver and spleen. In Enterococcus faecium (Streptococcus faecium), this protein is Bacteriocin E50-52.